Consider the following 276-residue polypeptide: Merozoite surface protein 2 (276 aa).

Residues 1–20 (MKVIKTLSIINFFIFVTFNI) form the signal peptide. Residues asparagine 22 and asparagine 36 are each glycosylated (N-linked (GlcNAc...) asparagine). The segment at 44 to 202 (AESNPSTGAG…EQTESPELQS (159 aa)) is polymorphic region. Positions 44 to 242 (AESNPSTGAG…CTDGNKENCG (199 aa)) are disordered. A compositionally biased stretch (gly residues) spans 51–90 (GAGGSGSAGGSGSAGGSGSAGGSGSAGGSGSAGSGDGNGA). A run of 5 repeats spans residues 53-58 (GGSGSA), 59-64 (GGSGSA), 65-70 (GGSGSA), 71-76 (GGSGSA), and 77-82 (GGSGSA). Positions 53 to 82 (GGSGSAGGSGSAGGSGSAGGSGSAGGSGSA) are 5 X 6 AA tandem repeats of G-G-S-G-S-A. Over residues 91 to 127 (NPGADAERSPSTPATTTTTTTTNDAEASTSTSSENPN) the composition is skewed to low complexity. 3 stretches are compositionally biased toward polar residues: residues 143–169 (KPNQ…NVPP), 176–187 (KSPTAQPEQAEN), and 194–204 (QTESPELQSAP). N-linked (GlcNAc...) asparagine glycosylation occurs at asparagine 153. An N-linked (GlcNAc...) asparagine glycan is attached at asparagine 225. Over residues 229–238 (SQKECTDGNK) the composition is skewed to basic and acidic residues. Cysteine 233 and cysteine 241 are joined by a disulfide. N-linked (GlcNAc...) asparagine glycosylation is present at asparagine 250. The GPI-anchor amidated asparagine moiety is linked to residue asparagine 250. Positions 251–276 (SSNIASINKFVVLISATLVLSFAIFI) are cleaved as a propeptide — removed in mature form.

It localises to the cell membrane. In terms of biological role, may play a role in the merozoite attachment to the erythrocyte. This chain is Merozoite surface protein 2, found in Plasmodium falciparum (isolate 7G8).